The chain runs to 62 residues: MFTLKKSLLLLLFLGTINLSLSEQERNAEEERRDDPEEMDAEVEKRAILTTLANWARKFLGK.

Positions 1–22 (MFTLKKSLLLLLFLGTINLSLS) are cleaved as a signal peptide. Positions 23–44 (EQERNAEEERRDDPEEMDAEVE) are excised as a propeptide. Residue Leu60 is modified to Leucine amide.

In terms of tissue distribution, expressed by the skin glands.

Its subcellular location is the secreted. In terms of biological role, has antimicrobial activity against some Gram-positive bacteria and fungi but has no activity against a range of Gram-negative bacteria except P.faecalis. Active against the Gram-positive bacteria S.aureus ATCC 25923 (MIC=37.5 uM), S.carnosus KHS (MIC=37.5 uM), B.licheniformis X39 (MIC=19 uM), R.rhodochrous X15 (MIC=4.8 uM), is virtually inactive against E.faecalis 981 (MIC=150 uM) and inactive against E.faecium 091299. Has some antimicrobial activity against the Gram-negative bacterium P.faecalis X29 (MIC=75 uM) and is inactive against E.coli, P.aeruginosa and S.typhi. Has antifungal activity against C.albicans ATCC 2002 (MIC=19 uM) and lower activity against the slime mold 090223 (MIC=75 uM). Has low hemolytic activity against human erythrocytes (LC(50)=75 uM). This Odorrana hainanensis (Odor frog) protein is Temporin-HN1.